The primary structure comprises 309 residues: Intron-encoded DNA endonuclease ai2a (309 aa).

The protein belongs to the LAGLIDADG endonuclease family.

It localises to the mitochondrion. Mitochondrial DNA endonuclease involved in intron homing. Cleaves only one strand of intronless DNA sequence at the site which coincides with the I-SceII cleavage recognition site. The sequence is that of Intron-encoded DNA endonuclease ai2a (ai2a) from Dictyostelium discoideum (Social amoeba).